A 469-amino-acid polypeptide reads, in one-letter code: Glutamate--tRNA ligase 1 (469 aa).

Positions 10-20 (PSPTGYLHIGG) match the 'HIGH' region motif. Residues C99, C101, C126, and D128 each contribute to the Zn(2+) site. The 'KMSKS' region signature appears at 237–241 (RLSKR). K240 provides a ligand contact to ATP.

Belongs to the class-I aminoacyl-tRNA synthetase family. Glutamate--tRNA ligase type 1 subfamily. As to quaternary structure, monomer. It depends on Zn(2+) as a cofactor.

Its subcellular location is the cytoplasm. The catalysed reaction is tRNA(Glu) + L-glutamate + ATP = L-glutamyl-tRNA(Glu) + AMP + diphosphate. In terms of biological role, catalyzes the attachment of glutamate to tRNA(Glu) in a two-step reaction: glutamate is first activated by ATP to form Glu-AMP and then transferred to the acceptor end of tRNA(Glu). This is Glutamate--tRNA ligase 1 from Coxiella burnetii (strain RSA 331 / Henzerling II).